The following is a 255-amino-acid chain: Type III pantothenate kinase (255 aa).

6 to 13 (DVGNTNIV) is an ATP binding site. Residues Tyr100 and 107–110 (GADR) contribute to the substrate site. The Proton acceptor role is filled by Asp109. K(+) is bound at residue Asp129. Thr132 is a binding site for ATP. Substrate is bound at residue Thr184.

It belongs to the type III pantothenate kinase family. As to quaternary structure, homodimer. Requires NH4(+) as cofactor. It depends on K(+) as a cofactor.

It is found in the cytoplasm. The catalysed reaction is (R)-pantothenate + ATP = (R)-4'-phosphopantothenate + ADP + H(+). Its pathway is cofactor biosynthesis; coenzyme A biosynthesis; CoA from (R)-pantothenate: step 1/5. In terms of biological role, catalyzes the phosphorylation of pantothenate (Pan), the first step in CoA biosynthesis. This Thermoanaerobacter sp. (strain X514) protein is Type III pantothenate kinase.